The chain runs to 25 residues: Retinol-binding protein 3 (25 aa).

It is found in the secreted. The protein resides in the extracellular space. It localises to the extracellular matrix. The protein localises to the interphotoreceptor matrix. Functionally, IRBP shuttles 11-cis and all trans retinoids between the retinol isomerase in the pigment epithelium and the visual pigments in the photoreceptor cells of the retina. In Sus scrofa (Pig), this protein is Retinol-binding protein 3 (RBP3).